A 325-amino-acid chain; its full sequence is Phospholipid phosphatase-related protein type 1 (325 aa).

N-linked (GlcNAc...) asparagine glycosylation is present at N5. 3 consecutive transmembrane segments (helical) span residues 13–33 (IIPC…LLAY), 67–87 (FISP…IIFI), and 127–147 (FIGV…AGQV). N163 is a glycosylation site (N-linked (GlcNAc...) asparagine). 3 helical membrane-spanning segments follow: residues 201–219 (AALS…TSTI), 226–244 (LAKP…LTGL), and 257–277 (VIAG…CVVH). S307 is modified (phosphoserine). N-linked (GlcNAc...) asparagine glycosylation is present at N316.

This sequence belongs to the PA-phosphatase related phosphoesterase family. As to expression, highly expressed in the brain. Also found in the liver, kidney and testis. In the brain shows a strongest expression in the hippocampus and cerebellum.

The protein localises to the cell membrane. The protein resides in the cell projection. It is found in the neuron projection. In terms of biological role, may play a role in neurite outgrowth and neurogenesis. This chain is Phospholipid phosphatase-related protein type 1, found in Rattus norvegicus (Rat).